The chain runs to 962 residues: CRACD-like protein (962 aa).

3 disordered regions span residues 38 to 102, 131 to 174, and 212 to 871; these read GKKK…PESG, NVKM…HDVG, and PAES…QEPV. The span at 46 to 61 shows a compositional bias: polar residues; the sequence is PSSTGSSTWKQSQTRN. Phosphoserine is present on serine 92. Basic residues predominate over residues 224-244; that stretch reads AKHKLQVKPRNQRSSKMRRLS. Residues 245 to 256 show a composition bias toward polar residues; sequence SRAQSESLSDLT. The span at 266–278 shows a compositional bias: basic and acidic residues; sequence EKPLLEVSPEERP. 2 stretches are compositionally biased toward pro residues: residues 292 to 303 and 354 to 365; these read EPGPPAPLPPPG and PPSPPEGPPNPG. A compositionally biased stretch (low complexity) spans 407-425; the sequence is PEGDTTPPETDPAATSEAP. Composition is skewed to basic and acidic residues over residues 429–440 and 459–480; these read DGPERSVPKEAE and EPEREAETEPERGAGTEPERIG. At serine 490 the chain carries Phosphoserine. Positions 503–521 are enriched in low complexity; sequence AAASEGPAASPPLAAAESP. Basic and acidic residues-rich tracts occupy residues 536–546, 555–570, 631–642, and 709–728; these read APERPKAERAE, AAPERKAERGGAELRG, KLAERGPQDSGD, and YSAEVRLERSLTVLPKEEKC. A compositionally biased stretch (pro residues) spans 753–764; it reads PEPLSSKPPLPR. 2 stretches are compositionally biased toward basic and acidic residues: residues 784–806 and 844–869; these read PGEREPRKEPRTAEKRPLRRGAE and QEDKPGARTLKSEPGKQAKVPERGQE.

This is CRACD-like protein from Homo sapiens (Human).